The following is a 953-amino-acid chain: Glycine dehydrogenase (decarboxylating) (953 aa).

At Lys-705 the chain carries N6-(pyridoxal phosphate)lysine.

Belongs to the GcvP family. In terms of assembly, the glycine cleavage system is composed of four proteins: P, T, L and H. Pyridoxal 5'-phosphate is required as a cofactor.

The enzyme catalyses N(6)-[(R)-lipoyl]-L-lysyl-[glycine-cleavage complex H protein] + glycine + H(+) = N(6)-[(R)-S(8)-aminomethyldihydrolipoyl]-L-lysyl-[glycine-cleavage complex H protein] + CO2. Functionally, the glycine cleavage system catalyzes the degradation of glycine. The P protein binds the alpha-amino group of glycine through its pyridoxal phosphate cofactor; CO(2) is released and the remaining methylamine moiety is then transferred to the lipoamide cofactor of the H protein. The sequence is that of Glycine dehydrogenase (decarboxylating) from Sodalis glossinidius (strain morsitans).